We begin with the raw amino-acid sequence, 384 residues long: S-adenosylmethionine synthase (384 aa).

ATP is bound at residue histidine 15. Aspartate 17 contacts Mg(2+). Glutamate 43 serves as a coordination point for K(+). Residues glutamate 56 and glutamine 99 each coordinate L-methionine. The tract at residues 99-109 (QSPDINQGVDR) is flexible loop. ATP is bound by residues 164–166 (DAK), 230–231 (RF), aspartate 239, 245–246 (RK), alanine 262, and lysine 266. Aspartate 239 serves as a coordination point for L-methionine. Lysine 270 is an L-methionine binding site.

This sequence belongs to the AdoMet synthase family. Homotetramer; dimer of dimers. Mg(2+) serves as cofactor. The cofactor is K(+).

Its subcellular location is the cytoplasm. The catalysed reaction is L-methionine + ATP + H2O = S-adenosyl-L-methionine + phosphate + diphosphate. The protein operates within amino-acid biosynthesis; S-adenosyl-L-methionine biosynthesis; S-adenosyl-L-methionine from L-methionine: step 1/1. Its function is as follows. Catalyzes the formation of S-adenosylmethionine (AdoMet) from methionine and ATP. The overall synthetic reaction is composed of two sequential steps, AdoMet formation and the subsequent tripolyphosphate hydrolysis which occurs prior to release of AdoMet from the enzyme. This is S-adenosylmethionine synthase from Proteus mirabilis (strain HI4320).